Consider the following 306-residue polypeptide: Pantothenate kinase (306 aa).

Residue 91 to 98 (GSVAVGKS) participates in ATP binding.

It belongs to the prokaryotic pantothenate kinase family.

It localises to the cytoplasm. The enzyme catalyses (R)-pantothenate + ATP = (R)-4'-phosphopantothenate + ADP + H(+). Its pathway is cofactor biosynthesis; coenzyme A biosynthesis; CoA from (R)-pantothenate: step 1/5. The sequence is that of Pantothenate kinase from Streptococcus equi subsp. equi (strain 4047).